A 374-amino-acid polypeptide reads, in one-letter code: Putative glutamate--cysteine ligase 2 (374 aa).

Belongs to the glutamate--cysteine ligase type 2 family. YbdK subfamily.

The enzyme catalyses L-cysteine + L-glutamate + ATP = gamma-L-glutamyl-L-cysteine + ADP + phosphate + H(+). Its function is as follows. ATP-dependent carboxylate-amine ligase which exhibits weak glutamate--cysteine ligase activity. The polypeptide is Putative glutamate--cysteine ligase 2 (Verminephrobacter eiseniae (strain EF01-2)).